The chain runs to 219 residues: UPF0126 membrane protein SCO5481 (219 aa).

6 helical membrane-spanning segments follow: residues 10–30 (VQHTLDLVGIFVFAISGALLA), 34–54 (NFDVFGIAVLAEVTALGGGLF), 66–86 (AFTDLGYFLTPLLATLLVFFL), 93–113 (LQTGVNIFDAAGLGLFCVAGT), 120–140 (GLGLTASACLGLTTAVGGGVL), and 158–178 (LYAVPAIVGSAMVALCIRYEA).

The protein belongs to the UPF0126 family.

The protein localises to the cell membrane. The protein is UPF0126 membrane protein SCO5481 of Streptomyces coelicolor (strain ATCC BAA-471 / A3(2) / M145).